Reading from the N-terminus, the 41-residue chain is Photosystem II reaction center protein Y (41 aa).

The chain crosses the membrane as a helical span at residues 7-25 (IAIVLAPVVIAASWAVFNI).

This sequence belongs to the PsbY family. In terms of assembly, PSII is composed of 1 copy each of membrane proteins PsbA, PsbB, PsbC, PsbD, PsbE, PsbF, PsbH, PsbI, PsbJ, PsbK, PsbL, PsbM, PsbT, PsbX, PsbY, PsbZ, Psb30/Ycf12, peripheral proteins PsbO, CyanoQ (PsbQ), PsbU, PsbV and a large number of cofactors. It forms dimeric complexes.

It localises to the cellular thylakoid membrane. Functionally, loosely associated component of the core of photosystem II (PSII), it is not always seen in crystals. PSII is a light-driven water plastoquinone oxidoreductase, using light energy to abstract electrons from H(2)O, generating a proton gradient subsequently used for ATP formation. The sequence is that of Photosystem II reaction center protein Y from Nostoc punctiforme (strain ATCC 29133 / PCC 73102).